Here is a 122-residue protein sequence, read N- to C-terminus: Large ribosomal subunit protein bL12 (122 aa).

Belongs to the bacterial ribosomal protein bL12 family. Homodimer. Part of the ribosomal stalk of the 50S ribosomal subunit. Forms a multimeric L10(L12)X complex, where L10 forms an elongated spine to which 2 to 4 L12 dimers bind in a sequential fashion. Binds GTP-bound translation factors.

Functionally, forms part of the ribosomal stalk which helps the ribosome interact with GTP-bound translation factors. Is thus essential for accurate translation. This Vibrio parahaemolyticus serotype O3:K6 (strain RIMD 2210633) protein is Large ribosomal subunit protein bL12.